Consider the following 336-residue polypeptide: MARLSPLHLRVQCAIRERQLLRPGQRLLVAFSGGQDSFSLLQILRDLQPRWRWQIFVLHCDHRWSADETACAQFLQGWLQQQGLPHAVETADPIRWDEAGARAWRYQQLDKWARTWSCEAVATGHTASDRAETFLWNLLRGTGAAGLVSLDWQRRLDERDPTSAWLVRPLLGLSRWETEEFCRQYQLPVWPDRSNQDLAHGRNRLRLEVMPYLKQHFNPQLEAALNRAATLLQAEHELVVAQAAQLWLQVYEPALPGLRRDPLRAAPLALQRQVMFQFLSLLLPHHPTFEQVEAGIRLLKAGRRSRSPDYPGGGWLEVRGDCVVWVAASQPASFVP.

32-37 (SGGQDS) contacts ATP.

It belongs to the tRNA(Ile)-lysidine synthase family.

The protein resides in the cytoplasm. The enzyme catalyses cytidine(34) in tRNA(Ile2) + L-lysine + ATP = lysidine(34) in tRNA(Ile2) + AMP + diphosphate + H(+). Ligates lysine onto the cytidine present at position 34 of the AUA codon-specific tRNA(Ile) that contains the anticodon CAU, in an ATP-dependent manner. Cytidine is converted to lysidine, thus changing the amino acid specificity of the tRNA from methionine to isoleucine. This chain is tRNA(Ile)-lysidine synthase, found in Synechococcus sp. (strain JA-3-3Ab) (Cyanobacteria bacterium Yellowstone A-Prime).